Reading from the N-terminus, the 271-residue chain is Neurexophilin-1 (271 aa).

An N-terminal signal peptide occupies residues methionine 1–cysteine 21. The interval alanine 22–leucine 97 is II. N-linked (GlcNAc...) asparagine glycosylation is found at asparagine 23, asparagine 68, asparagine 93, asparagine 146, asparagine 156, and asparagine 162. Residues glutamine 98–phenylalanine 176 are III. An IV (linker domain) region spans residues aspartate 177–aspartate 185. Positions alanine 186–glycine 271 are v (Cys-rich).

It belongs to the neurexophilin family. May be proteolytically processed at the boundary between the N-terminal non-conserved and the central conserved domain in neuron-like cells.

Its subcellular location is the secreted. May be signaling molecules that resemble neuropeptides. Ligand for alpha-neurexins. This chain is Neurexophilin-1 (NXPH1), found in Bos taurus (Bovine).